The following is a 546-amino-acid chain: Probable zinc metalloprotease EGY2, chloroplastic (546 aa).

Residues 1–64 (MQLPAMSCSP…QIRNRRFVCQ (64 aa)) constitute a chloroplast transit peptide. The interval 67–143 (TETEPDGDGN…DATPASDAQE (77 aa)) is disordered. Over residues 69-86 (TEPDGDGNGDEEKEELGD) the composition is skewed to acidic residues. Composition is skewed to polar residues over residues 89 to 110 (SSPS…TNAD) and 118 to 130 (NTEP…TVQN). The next 7 helical transmembrane spans lie at 257 to 277 (AVPE…TLLL), 301 to 321 (VYGA…HILA), 326 to 346 (GIKL…FGAI), 364 to 384 (AAGP…GFIL), 427 to 447 (PLVL…IPAG), 474 to 494 (LLGI…LIFF), and 514 to 534 (YISI…PYPF).

It belongs to the peptidase M50B family.

Its subcellular location is the plastid. It is found in the chloroplast membrane. Probable membrane-associated metalloprotease that may be involved in chloroplast development. The polypeptide is Probable zinc metalloprotease EGY2, chloroplastic (EGY2) (Oryza sativa subsp. japonica (Rice)).